We begin with the raw amino-acid sequence, 32 residues long: Alpha-amylase inhibitor AAI (32 aa).

Cystine bridges form between Cys-1–Cys-18, Cys-8–Cys-23, and Cys-17–Cys-31.

As to expression, endosperm.

Alpha-amylase inhibitor. It is active against alpha-amylases from Tribolium castaneum and Prostephanus truncatus larvae. This is Alpha-amylase inhibitor AAI (AAI) from Amaranthus hypochondriacus (Prince-of-Wales feather).